The following is a 354-amino-acid chain: Methylthioribose-1-phosphate isomerase (354 aa).

Substrate-binding positions include R54–A56, R97, and Q204. Catalysis depends on D245, which acts as the Proton donor. Position 255–256 (N255–K256) interacts with substrate.

It belongs to the eIF-2B alpha/beta/delta subunits family. MtnA subfamily.

It carries out the reaction 5-(methylsulfanyl)-alpha-D-ribose 1-phosphate = 5-(methylsulfanyl)-D-ribulose 1-phosphate. Its pathway is amino-acid biosynthesis; L-methionine biosynthesis via salvage pathway; L-methionine from S-methyl-5-thio-alpha-D-ribose 1-phosphate: step 1/6. In terms of biological role, catalyzes the interconversion of methylthioribose-1-phosphate (MTR-1-P) into methylthioribulose-1-phosphate (MTRu-1-P). The sequence is that of Methylthioribose-1-phosphate isomerase from Albidiferax ferrireducens (strain ATCC BAA-621 / DSM 15236 / T118) (Rhodoferax ferrireducens).